Here is a 107-residue protein sequence, read N- to C-terminus: Phycocyanobilin lyase subunit beta (107 aa).

Belongs to the CpcE/RpcE/PecE family. CpcE and CpcF associate to form a lyase.

Required for the chromophorylation of the CpcA gene product. This is Phycocyanobilin lyase subunit beta (cpcF) from Mastigocladus laminosus (Fischerella sp.).